The primary structure comprises 513 residues: Histidine--tRNA ligase (513 aa).

The N-terminal 24 residues, 1-24, are a transit peptide targeting the mitochondrion; it reads MADKAQLQEAIKTQGEVVRKLKSE. A WHEP-TRS domain is found at 3–59; it reads DKAQLQEAIKTQGEVVRKLKSEKASKEQIDEEVARLLQLKAQLGGDEGKHVFVLKTA. Residues 130-132, arginine 157, glutamine 173, aspartate 177, arginine 326, and 330-331 contribute to the L-histidine site; these read DLT and YY.

This sequence belongs to the class-II aminoacyl-tRNA synthetase family.

The protein resides in the cytoplasm. Its subcellular location is the mitochondrion. It catalyses the reaction tRNA(His) + L-histidine + ATP = L-histidyl-tRNA(His) + AMP + diphosphate + H(+). Catalyzes the aminoacylation of histidyl-tRNA. This Danio rerio (Zebrafish) protein is Histidine--tRNA ligase.